Here is a 378-residue protein sequence, read N- to C-terminus: MKHSVHFGAGNIGRGFIGEILFKNGFHIDFVDVNNQIIHALNEKGKYEIEIAQKGQSRIEVTNVAGINSKEHPEQVIEAIQKTDIITTAIGPNILPFIAELLAKGIEARRVAGNTQALDVMACENMIGGSQFLYQEVKKYLSPEGLTFADNYIGFPNAAVDRIVPTQSHEDSLFVMVEPFNEWVVETKRLKNPDLRLEDVHYEEDLEPFIERKLFSVNSGHATSAYIGAHYGAKTILEALQNPNIKSRIESVLAEIRSLLIAKWNFDKKELENYHKVIIERFENPFIVDEVSRVARTPIRKLGYNERFIRPIRELKELSLSYKNLLKTVGYAFDYRDVNDEESIRLGELLAKQSVKDVVIQVTGLDDQELIERIVEYI.

4–15 (SVHFGAGNIGRG) lines the NAD(+) pocket.

This sequence belongs to the mannitol dehydrogenase family.

The catalysed reaction is D-mannitol 1-phosphate + NAD(+) = beta-D-fructose 6-phosphate + NADH + H(+). The sequence is that of Mannitol-1-phosphate 5-dehydrogenase from Streptococcus pneumoniae (strain ATCC 700669 / Spain 23F-1).